Here is a 138-residue protein sequence, read N- to C-terminus: ATP synthase epsilon chain, chloroplastic (138 aa).

This sequence belongs to the ATPase epsilon chain family. In terms of assembly, F-type ATPases have 2 components, CF(1) - the catalytic core - and CF(0) - the membrane proton channel. CF(1) has five subunits: alpha(3), beta(3), gamma(1), delta(1), epsilon(1). CF(0) has three main subunits: a, b and c.

Its subcellular location is the plastid. It localises to the chloroplast thylakoid membrane. Functionally, produces ATP from ADP in the presence of a proton gradient across the membrane. The protein is ATP synthase epsilon chain, chloroplastic of Huperzia lucidula (Shining clubmoss).